An 88-amino-acid polypeptide reads, in one-letter code: Small ribosomal subunit protein uS17 (88 aa).

Belongs to the universal ribosomal protein uS17 family. As to quaternary structure, part of the 30S ribosomal subunit.

Its function is as follows. One of the primary rRNA binding proteins, it binds specifically to the 5'-end of 16S ribosomal RNA. The protein is Small ribosomal subunit protein uS17 of Prochlorococcus marinus (strain SARG / CCMP1375 / SS120).